The sequence spans 553 residues: Coiled-coil domain-containing protein 22 homolog (553 aa).

2 coiled-coil regions span residues 261–404 (LEEL…TATQ) and 498–553 (NVTK…VAKA).

Belongs to the CCDC22 family.

In Drosophila pseudoobscura pseudoobscura (Fruit fly), this protein is Coiled-coil domain-containing protein 22 homolog.